The sequence spans 228 residues: Outer membrane protein assembly factor BamE (228 aa).

A signal peptide spans 1–29 (MNPILKGVYSPARLGVVALTLFGILGVTG). The N-palmitoyl cysteine moiety is linked to residue cysteine 30. Cysteine 30 carries the S-diacylglycerol cysteine lipid modification. The segment at 197-228 (DFFGSSKKDPDPQSPQLGPGTLNDVPKPADSK) is disordered.

The protein belongs to the BamE family. Part of the Bam complex.

Its subcellular location is the cell outer membrane. In terms of biological role, part of the outer membrane protein assembly complex, which is involved in assembly and insertion of beta-barrel proteins into the outer membrane. In Polynucleobacter necessarius subsp. necessarius (strain STIR1), this protein is Outer membrane protein assembly factor BamE.